The following is a 273-amino-acid chain: Light-independent protochlorophyllide reductase iron-sulfur ATP-binding protein (273 aa).

ATP-binding positions include 12–17 (GIGKST) and lysine 41. Serine 16 serves as a coordination point for Mg(2+). Residues cysteine 97 and cysteine 131 each coordinate [4Fe-4S] cluster. An ATP-binding site is contributed by 182–183 (NR).

This sequence belongs to the NifH/BchL/ChlL family. Homodimer. Protochlorophyllide reductase is composed of three subunits; BchL, BchN and BchB. [4Fe-4S] cluster serves as cofactor.

It carries out the reaction chlorophyllide a + oxidized 2[4Fe-4S]-[ferredoxin] + 2 ADP + 2 phosphate = protochlorophyllide a + reduced 2[4Fe-4S]-[ferredoxin] + 2 ATP + 2 H2O. It functions in the pathway porphyrin-containing compound metabolism; bacteriochlorophyll biosynthesis (light-independent). Component of the dark-operative protochlorophyllide reductase (DPOR) that uses Mg-ATP and reduced ferredoxin to reduce ring D of protochlorophyllide (Pchlide) to form chlorophyllide a (Chlide). This reaction is light-independent. The L component serves as a unique electron donor to the NB-component of the complex, and binds Mg-ATP. The sequence is that of Light-independent protochlorophyllide reductase iron-sulfur ATP-binding protein from Chloroflexus aggregans (strain MD-66 / DSM 9485).